The following is a 468-amino-acid chain: 3-isopropylmalate dehydratase large subunit (468 aa).

[4Fe-4S] cluster is bound by residues Cys-349, Cys-409, and Cys-412.

The protein belongs to the aconitase/IPM isomerase family. LeuC type 1 subfamily. As to quaternary structure, heterodimer of LeuC and LeuD. [4Fe-4S] cluster is required as a cofactor.

The catalysed reaction is (2R,3S)-3-isopropylmalate = (2S)-2-isopropylmalate. The protein operates within amino-acid biosynthesis; L-leucine biosynthesis; L-leucine from 3-methyl-2-oxobutanoate: step 2/4. In terms of biological role, catalyzes the isomerization between 2-isopropylmalate and 3-isopropylmalate, via the formation of 2-isopropylmaleate. The polypeptide is 3-isopropylmalate dehydratase large subunit (Roseobacter denitrificans (strain ATCC 33942 / OCh 114) (Erythrobacter sp. (strain OCh 114))).